The sequence spans 174 residues: MKHTLSVLVQDEAGVLSRISGLFARRGFNIASLAVGPAEQIGVSRITMVVQGDNRTIEQLTKQLYKLVNILNVQDVTNIPSVERELMLIKIQINSQTRTEALEIVRIFRAKIVDIAEDLLIIEVTGDPGKIVAIEQLLTKFGIIEIARTGKILLVRTSKINTEYLKNRVVAYGT.

The ACT domain occupies threonine 4 to asparagine 78.

Belongs to the acetolactate synthase small subunit family. As to quaternary structure, dimer of large and small chains.

It localises to the plastid. The protein resides in the chloroplast. It catalyses the reaction 2 pyruvate + H(+) = (2S)-2-acetolactate + CO2. The protein operates within amino-acid biosynthesis; L-isoleucine biosynthesis; L-isoleucine from 2-oxobutanoate: step 1/4. It functions in the pathway amino-acid biosynthesis; L-valine biosynthesis; L-valine from pyruvate: step 1/4. This is Acetolactate synthase small subunit (ilvH) from Pyropia yezoensis (Susabi-nori).